A 172-amino-acid polypeptide reads, in one-letter code: Transcriptional regulator TAC1 (172 aa).

Residues 1–28 are disordered; the sequence is MENIKNPKNADDCSDSISKNSHQGVDDS. Residues 15 to 28 are compositionally biased toward polar residues; it reads DSISKNSHQGVDDS. Residues 35–57 form a C2H2-type zinc finger; it reads YVCSFCIRGFSNAQALGGHMNIH. An EAR-like (transcriptional repression) motif is present at residues 156–160; the sequence is LDLEL.

Preferentially expressed in roots and flowers. Slightly expressed in leaves and stems.

It localises to the nucleus. Its function is as follows. Activation factor which mediates telomerase activity and potentiates responses to auxin through the regulation of BT2. Binds in vitro to the DNA sequence 5'-GACAGTGTTAC-3' of the BT2 promoter. The protein is Transcriptional regulator TAC1 (TAC1) of Arabidopsis thaliana (Mouse-ear cress).